Reading from the N-terminus, the 309-residue chain is Protein MAK16 homolog (309 aa).

Residues 194–309 are disordered; sequence EADQFSEEEA…IEEETENQAN (116 aa). Acidic residues-rich tracts occupy residues 195 to 227 and 235 to 270; these read ADQF…DIED and VEGD…DDEE. Positions 275 to 293 are enriched in basic residues; it reads ITKKRGPTFKPTKKTPQKR. Residues 299 to 309 are compositionally biased toward acidic residues; sequence EIEEETENQAN.

Belongs to the MAK16 family.

It localises to the nucleus. It is found in the nucleolus. The protein is Protein MAK16 homolog (mak16l) of Dictyostelium discoideum (Social amoeba).